Consider the following 453-residue polypeptide: Chromosomal replication initiator protein DnaA (453 aa).

The domain I, interacts with DnaA modulators stretch occupies residues 1-73; sequence MNISPQYLWN…AQEVASVVGY (73 aa). Residues 73–112 form a domain II region; that stretch reads YPVDIQLTTAEGETMAMTGEAQSYQEKSLTQIAPESPKLN. A domain III, AAA+ region region spans residues 113–329; the sequence is QLNPRYTFSR…GALIRAIAYT (217 aa). ATP contacts are provided by Gly-157, Gly-159, Lys-160, and Thr-161. The segment at 330-453 is domain IV, binds dsDNA; it reads SISGLSMTVQ…RINMASRTQS (124 aa).

Belongs to the DnaA family. Oligomerizes as a right-handed, spiral filament on DNA at oriC.

The protein localises to the cytoplasm. Plays an essential role in the initiation and regulation of chromosomal replication. ATP-DnaA binds to the origin of replication (oriC) to initiate formation of the DNA replication initiation complex once per cell cycle. Binds the DnaA box (a 9 base pair repeat at the origin) and separates the double-stranded (ds)DNA. Forms a right-handed helical filament on oriC DNA; dsDNA binds to the exterior of the filament while single-stranded (ss)DNA is stabiized in the filament's interior. The ATP-DnaA-oriC complex binds and stabilizes one strand of the AT-rich DNA unwinding element (DUE), permitting loading of DNA polymerase. After initiation quickly degrades to an ADP-DnaA complex that is not apt for DNA replication. Binds acidic phospholipids. This chain is Chromosomal replication initiator protein DnaA, found in Rippkaea orientalis (strain PCC 8801 / RF-1) (Cyanothece sp. (strain PCC 8801)).